A 351-amino-acid polypeptide reads, in one-letter code: Meiotically up-regulated gene 1 protein (351 aa).

It localises to the cytoplasm. Its function is as follows. Required for correct meiotic chromosome segregation. The polypeptide is Meiotically up-regulated gene 1 protein (mug1) (Schizosaccharomyces pombe (strain 972 / ATCC 24843) (Fission yeast)).